We begin with the raw amino-acid sequence, 103 residues long: MQNQRIRIRLKAFDHRLIDQSTAEIVETAKRTGAQVRGPIPLPTRKERFTILISPHVNKDARDQYEIRTHKRLVDIVEPTEKTVDALMRLDLAAGVDVQISLG.

Belongs to the universal ribosomal protein uS10 family. In terms of assembly, part of the 30S ribosomal subunit.

Its function is as follows. Involved in the binding of tRNA to the ribosomes. This Pectobacterium atrosepticum (strain SCRI 1043 / ATCC BAA-672) (Erwinia carotovora subsp. atroseptica) protein is Small ribosomal subunit protein uS10.